A 107-amino-acid chain; its full sequence is Nucleoid-associated protein Atu0095 (107 aa).

Residues 81–107 (KGEAQAQEKMADLTAGLPLPPGMKLPF) form a disordered region. Positions 98 to 107 (PLPPGMKLPF) are enriched in pro residues.

This sequence belongs to the YbaB/EbfC family. In terms of assembly, homodimer.

Its subcellular location is the cytoplasm. It is found in the nucleoid. Binds to DNA and alters its conformation. May be involved in regulation of gene expression, nucleoid organization and DNA protection. The sequence is that of Nucleoid-associated protein Atu0095 from Agrobacterium fabrum (strain C58 / ATCC 33970) (Agrobacterium tumefaciens (strain C58)).